Consider the following 642-residue polypeptide: Threonine--tRNA ligase (642 aa).

Residues 1–61 (MPVITLPDGS…ENDATLSIIT (61 aa)) enclose the TGS domain. A catalytic region spans residues 243–534 (DHRKIGKQLD…LTEEFAGFFP (292 aa)). Zn(2+)-binding residues include Cys334, His385, and His511.

The protein belongs to the class-II aminoacyl-tRNA synthetase family. As to quaternary structure, homodimer. It depends on Zn(2+) as a cofactor.

It is found in the cytoplasm. It catalyses the reaction tRNA(Thr) + L-threonine + ATP = L-threonyl-tRNA(Thr) + AMP + diphosphate + H(+). Catalyzes the attachment of threonine to tRNA(Thr) in a two-step reaction: L-threonine is first activated by ATP to form Thr-AMP and then transferred to the acceptor end of tRNA(Thr). Also edits incorrectly charged L-seryl-tRNA(Thr). The polypeptide is Threonine--tRNA ligase (Salmonella heidelberg (strain SL476)).